The sequence spans 178 residues: 5,6,7,8-tetrahydromethanopterin hydro-lyase (178 aa).

His-33 (proton donor) is an active-site residue. Asp-35, Leu-64, Lys-82, Thr-84, and Gln-99 together coordinate substrate.

The protein belongs to the formaldehyde-activating enzyme family.

The protein resides in the cytoplasm. It carries out the reaction 5,6,7,8-tetrahydromethanopterin + formaldehyde = 5,10-methylenetetrahydromethanopterin + H2O. Functionally, catalyzes the condensation of formaldehyde with tetrahydromethanopterin (H(4)MPT) to 5,10-methylenetetrahydromethanopterin. This is 5,6,7,8-tetrahydromethanopterin hydro-lyase (faeA) from Methanosarcina barkeri (strain Fusaro / DSM 804).